A 275-amino-acid chain; its full sequence is MEPSLLMWRFFVFIVVPGCVTEACHDDPPSLRNAMFKVFRYEVGTMINCDCKTGFRRVSAVMRCVGDSSHSAWENRCFCNSTSPAKNQVKQVTPAPEEHREKKHTDAQNQTQPPEEADLPGHCEEPPPWEHEREPLKRVYHFTLGQTVHYQCAQGFRALQTSPAESTCMMINGELRWTRPRLKCIREGEHGQASDDAEPQESTEAPPGSGTFLPTRMAGTTNFQKPTDEIATLDTFIFTTEYQIAVAGCTLLLASILLLSCLTWQRKWKKNRRTI.

An N-terminal signal peptide occupies residues 1–21; it reads MEPSLLMWRFFVFIVVPGCVT. A Sushi 1 domain is found at 22–81; the sequence is EACHDDPPSLRNAMFKVFRYEVGTMINCDCKTGFRRVSAVMRCVGDSSHSAWENRCFCNS. The Extracellular portion of the chain corresponds to 22–243; it reads EACHDDPPSL…DTFIFTTEYQ (222 aa). 3 disulfide bridges follow: cysteine 24–cysteine 64, cysteine 49–cysteine 77, and cysteine 51–cysteine 79. The N-linked (GlcNAc...) asparagine glycan is linked to asparagine 80. The tract at residues 88–130 is disordered; sequence QVKQVTPAPEEHREKKHTDAQNQTQPPEEADLPGHCEEPPPWE. Positions 96–106 are enriched in basic and acidic residues; that stretch reads PEEHREKKHTD. An N-linked (GlcNAc...) asparagine glycan is attached at asparagine 109. Residues 119–130 are compositionally biased toward basic and acidic residues; it reads LPGHCEEPPPWE. The region spanning 121 to 186 is the Sushi 2 domain; that stretch reads GHCEEPPPWE…WTRPRLKCIR (66 aa). 2 disulfides stabilise this stretch: cysteine 123–cysteine 168 and cysteine 152–cysteine 184. Positions 188 to 221 are disordered; it reads GEHGQASDDAEPQESTEAPPGSGTFLPTRMAGTT. The chain crosses the membrane as a helical span at residues 244-262; it reads IAVAGCTLLLASILLLSCL. At 263-275 the chain is on the cytoplasmic side; that stretch reads TWQRKWKKNRRTI.

Non-covalent dimer of an alpha and a beta subunit. IL2R exists in 3 different forms: a high affinity dimer, an intermediate affinity monomer (beta subunit), and a low affinity monomer (alpha subunit). The high and intermediate affinity forms also associate with a gamma subunit.

Its subcellular location is the membrane. Its function is as follows. Receptor for interleukin-2. The receptor is involved in the regulation of immune tolerance by controlling regulatory T cells (TREGs) activity. TREGs suppress the activation and expansion of autoreactive T-cells. The sequence is that of Interleukin-2 receptor subunit alpha (IL2RA) from Bos taurus (Bovine).